Reading from the N-terminus, the 271-residue chain is MTNDTERLVVYIVSDSVGETAELVVKAAVSQFSGSNVELRRIPYVEDKGTIQEVVQIARKAKALIAFTLVVPEIRDFLLESAKAANVETVDIIGPVLSKITDLTNAKPRYEPGLIYRLDEDYFRKVEAIEFAVKYDDGRDPRGIILADIVLIGVSRTSKTPLSQYLAHKRLKVANVPLVPEVEPPEELFKISSKKCIGLKISPEKLNSIRTERLKALGLKSEANYANIDRIKEELEYAKKVMDRVNCPVIDVSNKAVEETANLISSMFQRN.

153 to 160 (GVSRTSKT) contributes to the ADP binding site.

It belongs to the pyruvate, phosphate/water dikinase regulatory protein family. PDRP subfamily.

The catalysed reaction is N(tele)-phospho-L-histidyl/L-threonyl-[pyruvate, phosphate dikinase] + ADP = N(tele)-phospho-L-histidyl/O-phospho-L-threonyl-[pyruvate, phosphate dikinase] + AMP + H(+). It catalyses the reaction N(tele)-phospho-L-histidyl/O-phospho-L-threonyl-[pyruvate, phosphate dikinase] + phosphate + H(+) = N(tele)-phospho-L-histidyl/L-threonyl-[pyruvate, phosphate dikinase] + diphosphate. In terms of biological role, bifunctional serine/threonine kinase and phosphorylase involved in the regulation of the pyruvate, phosphate dikinase (PPDK) by catalyzing its phosphorylation/dephosphorylation. The sequence is that of Putative pyruvate, phosphate dikinase regulatory protein from Shouchella clausii (strain KSM-K16) (Alkalihalobacillus clausii).